The chain runs to 785 residues: MIGSINESPIEEHMNDSPSTKEKADSVDISDYIVSHSDDSLSKDIKKDTKSFLDVEHGEISTVDEFEEDSPYPEVRAAVPPTDDPSMPCNTIRMWTIGLIYSTVGAAVNMFFSLRNPTVTLSVLISELLAYPALQIWDLIFPDREFRIGRLKFNFKPGPFNVKEHALIVVMSSVSFGNAYSTDIILAQRVHYKQRFGFGYEICLTLATQLIGYGLAGLSRRLLVRPASMLWPVNLVQCTLIKTLHRKDLRNAVANGWRISPFRFFLYVFIASFIWNWFPSYIFQALSLFAWVTWIRPNSPTVNQIFGESTGISILPMTFDWNQISAYILSPLMAPADALMNILLGVILFFWIVTPALNFTNTWYGDYLPISSSGIIDHFGNSYNVTRILTKDATFDLDAYQNYSPIFMSTTYALAFGLSFASITSVIFHVILYHGKEIYDRLRDPPAPDIHEKLMKAYDEVPFYWYLSVFLAFFGMMMGTIYGWKTETPWWVIIVGVIFSAVWFIPIGIVQAITNIQLGLNVFTEFIVGYMYPGRPLAMMIFKTVGYITMTQGLAFAADLKFGHYMKLPPRIMFYTQMIATIWSCFVQIGVLDWALGNIDNVCQADQPDNYTCPNATVFFNSSVIWGVIGPKRMFSGKNTYTGLQYFWLAGVLGTILFWALWKKWPQKWWGQLNGPLIFGGTGYIPPATPVNYLAWSGIGLFFNYYLKKIFADWWQKYNFTLSAALDTGTQLSVIILFFCLQLPMVNFPDWWGNDGAFNTLDATGAAVRKLVNESAGEFFGPAEW.

The tract at residues 1-28 (MIGSINESPIEEHMNDSPSTKEKADSVD) is disordered. Residues 10–26 (IEEHMNDSPSTKEKADS) are compositionally biased toward basic and acidic residues. The next 16 membrane-spanning stretches (helical) occupy residues 94-114 (MWTI…FFSL), 121-141 (LSVL…DLIF), 167-187 (LIVV…IILA), 196-216 (FGFG…YGLA), 264-284 (FFLY…YIFQ), 339-359 (LMNI…ALNF), 413-433 (ALAF…VILY), 461-481 (VPFY…MGTI), 490-510 (WWVI…IGIV), 512-532 (AITN…GYMY), 537-557 (LAMM…LAFA), 572-592 (IMFY…IGVL), 611-631 (YTCP…VIGP), 642-662 (TGLQ…WALW), 683-703 (GYIP…GLFF), and 732-752 (LSVI…PDWW).

Belongs to the oligopeptide OPT transporter family.

It is found in the endoplasmic reticulum membrane. The chain is Sexual differentiation process protein isp4 (isp4) from Schizosaccharomyces pombe (strain 972 / ATCC 24843) (Fission yeast).